Here is a 117-residue protein sequence, read N- to C-terminus: Ribonuclease P protein component (117 aa).

Belongs to the RnpA family. Consists of a catalytic RNA component (M1 or rnpB) and a protein subunit.

It carries out the reaction Endonucleolytic cleavage of RNA, removing 5'-extranucleotides from tRNA precursor.. RNaseP catalyzes the removal of the 5'-leader sequence from pre-tRNA to produce the mature 5'-terminus. It can also cleave other RNA substrates such as 4.5S RNA. The protein component plays an auxiliary but essential role in vivo by binding to the 5'-leader sequence and broadening the substrate specificity of the ribozyme. This chain is Ribonuclease P protein component, found in Thermotoga maritima (strain ATCC 43589 / DSM 3109 / JCM 10099 / NBRC 100826 / MSB8).